The sequence spans 89 residues: NADH-ubiquinone oxidoreductase chain 4L (89 aa).

3 consecutive transmembrane segments (helical) span residues 1-21, 22-42, and 57-77; these read MNLT…NRKN, IILM…LILV, and IYII…LVAF.

It belongs to the complex I subunit 4L family.

The protein resides in the mitochondrion membrane. It carries out the reaction a ubiquinone + NADH + 5 H(+)(in) = a ubiquinol + NAD(+) + 4 H(+)(out). Its function is as follows. Core subunit of the mitochondrial membrane respiratory chain NADH dehydrogenase (Complex I) that is believed to belong to the minimal assembly required for catalysis. Complex I functions in the transfer of electrons from NADH to the respiratory chain. The immediate electron acceptor for the enzyme is believed to be ubiquinone. In Cryphonectria parasitica (Chestnut blight fungus), this protein is NADH-ubiquinone oxidoreductase chain 4L (ND4L).